The chain runs to 323 residues: Methionyl-tRNA formyltransferase (323 aa).

121–124 contributes to the (6S)-5,6,7,8-tetrahydrofolate binding site; sequence SLLP.

Belongs to the Fmt family.

It carries out the reaction L-methionyl-tRNA(fMet) + (6R)-10-formyltetrahydrofolate = N-formyl-L-methionyl-tRNA(fMet) + (6S)-5,6,7,8-tetrahydrofolate + H(+). In terms of biological role, attaches a formyl group to the free amino group of methionyl-tRNA(fMet). The formyl group appears to play a dual role in the initiator identity of N-formylmethionyl-tRNA by promoting its recognition by IF2 and preventing the misappropriation of this tRNA by the elongation apparatus. This chain is Methionyl-tRNA formyltransferase, found in Desulfotalea psychrophila (strain LSv54 / DSM 12343).